A 159-amino-acid chain; its full sequence is UPF0178 protein AZC_4000 (159 aa).

This sequence belongs to the UPF0178 family.

This chain is UPF0178 protein AZC_4000, found in Azorhizobium caulinodans (strain ATCC 43989 / DSM 5975 / JCM 20966 / LMG 6465 / NBRC 14845 / NCIMB 13405 / ORS 571).